The following is a 50-amino-acid chain: Large ribosomal subunit protein eL39 (50 aa).

Belongs to the eukaryotic ribosomal protein eL39 family.

This chain is Large ribosomal subunit protein eL39, found in Methanosphaerula palustris (strain ATCC BAA-1556 / DSM 19958 / E1-9c).